The sequence spans 208 residues: Hemocyanin, units E and F (208 aa).

Residue H1 coordinates Cu cation. The tract at residues 1 to 74 (HGLPAQCPNA…HDLESVRGNL (74 aa)) is unit E. Cysteines 7 and 18 form a disulfide. Residues 19–21 (CLH) constitute a cross-link (2'-(S-cysteinyl)-histidine (Cys-His)). The N-linked (GlcNAc...) asparagine glycan is linked to N43. The tract at residues 75-208 (VRKNVDRLSL…GHLSLLSPET (134 aa)) is unit F. H113 contacts Cu cation. C119 and C130 are oxidised to a cystine. Positions 131-133 (CLH) form a cross-link, 2'-(S-cysteinyl)-histidine (Cys-His). Cu cation-binding residues include H133 and H142.

The protein belongs to the tyrosinase family. Hemocyanin subfamily. In terms of assembly, decamers of large identical subunits (390 kDa), each containing 8 globular oxygen-binding functional units. It depends on Cu(2+) as a cofactor.

In terms of biological role, hemocyanins are copper-containing oxygen carriers occurring freely dissolved in the hemolymph of many mollusks and arthropods. The polypeptide is Hemocyanin, units E and F (Sepia officinalis (Common cuttlefish)).